The primary structure comprises 63 residues: Large ribosomal subunit protein uL29 (63 aa).

This sequence belongs to the universal ribosomal protein uL29 family.

This is Large ribosomal subunit protein uL29 from Serratia proteamaculans (strain 568).